The following is a 1317-amino-acid chain: DNA-directed RNA polymerase subunit beta' (1317 aa).

The Zn(2+) site is built by C60, C62, C75, and C78. The tract at residues 183–209 (ELEDEGAKSDVKRKVRDGGEREMRQLR) is disordered. Residues D535, D537, and D539 each contribute to the Mg(2+) site. C890, C967, C974, and C977 together coordinate Zn(2+).

This sequence belongs to the RNA polymerase beta' chain family. In terms of assembly, the RNAP catalytic core consists of 2 alpha, 1 beta, 1 beta' and 1 omega subunit. When a sigma factor is associated with the core the holoenzyme is formed, which can initiate transcription. The cofactor is Mg(2+). It depends on Zn(2+) as a cofactor.

It catalyses the reaction RNA(n) + a ribonucleoside 5'-triphosphate = RNA(n+1) + diphosphate. Its function is as follows. DNA-dependent RNA polymerase catalyzes the transcription of DNA into RNA using the four ribonucleoside triphosphates as substrates. The chain is DNA-directed RNA polymerase subunit beta' from Mycolicibacterium vanbaalenii (strain DSM 7251 / JCM 13017 / BCRC 16820 / KCTC 9966 / NRRL B-24157 / PYR-1) (Mycobacterium vanbaalenii).